The primary structure comprises 434 residues: Zinc finger protein kipf (434 aa).

Residues 7 to 88 (NVCRTCMDET…EQSYQHFFRV (82 aa)) form the ZAD domain. Zn(2+)-binding residues include C9, C12, C61, and C64. Residues 117–173 (QLKSDRQQDTQQMTKTQKPDDDLSQKQTLQAKLQEGNIDGPPESFTLHPRKRTCRTE) form a disordered region. The C2H2-type 1; degenerate zinc finger occupies 197–219 (YNCPHCSKRFCSQTQLRTHITDL). C2H2-type zinc fingers lie at residues 221-243 (NRCPYCPRTYMQKSNLKRHLRNH), 249-271 (HKCFHCSKAFMRKDHLKRHLRTH), and 277-299 (LSCSQCSAVFIEHVQLEIHRREH). The interval 295-328 (HRREHKQRPGSSKSESTKDPDSDDSDQAQDLKPK) is disordered. S316 and S319 each carry phosphoserine. 3 C2H2-type zinc fingers span residues 348–370 (PICDICQKKFSSVYALKRHMLTH), 377–399 (KKCTYCSEEFKTEKHLKRHERGH), and 404–427 (FRCEFCSLVFVDVNYLRKHKKRIH).

As to quaternary structure, homodimer; mediated by the ZAD domain. Interacts (via C2H2 type zinc finger 4) with rhi/rhino (via Chromo domain). Dimerization is required for association with DNA and interaction with rhi/rhino. Primarily expressed in ovaries and absent from testes. In ovaries very low levels in germline stem cells and cystoblasts but abundant in developing cysts and polyploid nurse cells.

Its subcellular location is the nucleus. The protein resides in the chromosome. Functionally, DNA-binding zinc finger protein that recruits chromo domain protein rhino/rhi to specific chromatin regions enriched in H3K9me2/3 histone methylation, mediating piRNA (piwi-interacting RNA) biogenesis. May bind to GC rich DNA sequences including a 5'-GRGGN-3' sequence motif. Nucleates rhi/rhino accumulation and stabilizes its expansion. Involved in piRNA transposon repression, particularly in the female ovary during oogenesis. In Drosophila melanogaster (Fruit fly), this protein is Zinc finger protein kipf.